We begin with the raw amino-acid sequence, 129 residues long: Small ribosomal subunit protein uS11 (129 aa).

This sequence belongs to the universal ribosomal protein uS11 family. In terms of assembly, part of the 30S ribosomal subunit. Interacts with proteins S7 and S18. Binds to IF-3.

In terms of biological role, located on the platform of the 30S subunit, it bridges several disparate RNA helices of the 16S rRNA. Forms part of the Shine-Dalgarno cleft in the 70S ribosome. The chain is Small ribosomal subunit protein uS11 from Lawsonia intracellularis (strain PHE/MN1-00).